Reading from the N-terminus, the 289-residue chain is Nitrogenase iron protein (289 aa).

8–15 (GKGGIGKS) contacts ATP. Cys96 contributes to the [4Fe-4S] cluster binding site. Arg99 carries the ADP-ribosylarginine; by dinitrogenase reductase ADP-ribosyltransferase modification. Cys130 is a binding site for [4Fe-4S] cluster.

This sequence belongs to the NifH/BchL/ChlL family. As to quaternary structure, homodimer. [4Fe-4S] cluster is required as a cofactor. In terms of processing, the reversible ADP-ribosylation of Arg-99 inactivates the nitrogenase reductase and regulates nitrogenase activity.

It catalyses the reaction N2 + 8 reduced [2Fe-2S]-[ferredoxin] + 16 ATP + 16 H2O = H2 + 8 oxidized [2Fe-2S]-[ferredoxin] + 2 NH4(+) + 16 ADP + 16 phosphate + 6 H(+). Functionally, the key enzymatic reactions in nitrogen fixation are catalyzed by the nitrogenase complex, which has 2 components: the iron protein and the molybdenum-iron protein. This is Nitrogenase iron protein from Parafrankia sp. (strain EAN1pec).